Reading from the N-terminus, the 618-residue chain is UvrABC system protein C (618 aa).

One can recognise a GIY-YIG domain in the interval 20–98 (TAPGVYRMYA…IKSLSPRYNV (79 aa)). The region spanning 207–242 (DQLGEEIMQSMQQASEALEFERAARLRDLLSSLRSM) is the UVR domain.

The protein belongs to the UvrC family. As to quaternary structure, interacts with UvrB in an incision complex.

Its subcellular location is the cytoplasm. In terms of biological role, the UvrABC repair system catalyzes the recognition and processing of DNA lesions. UvrC both incises the 5' and 3' sides of the lesion. The N-terminal half is responsible for the 3' incision and the C-terminal half is responsible for the 5' incision. This Xanthomonas oryzae pv. oryzae (strain MAFF 311018) protein is UvrABC system protein C.